The chain runs to 760 residues: Ring-infected erythrocyte surface antigen (760 aa).

The interval 214 to 300 is disordered; sequence DTSQEESVEE…SDVQQTSEAA (87 aa). Residues 216 to 230 are compositionally biased toward acidic residues; sequence SQEESVEENEEEHTV. Residues 231 to 242 show a composition bias toward basic and acidic residues; that stretch reads DDEHVEEHTADD. The span at 243-256 shows a compositional bias: acidic residues; the sequence is EHVEEPTVADDEHV. The span at 262-288 shows a compositional bias: basic and acidic residues; sequence ADEHVEEPTVAEEHVEEPTVAEEHVEE. The 69-residue stretch at 307-375 folds into the J domain; that stretch reads DTLYYDILGV…KRWYNKYGYD (69 aa). Asn425, Asn559, and Asn563 each carry an N-linked (GlcNAc...) asparagine glycan. The span at 683–692 shows a compositional bias: basic and acidic residues; that stretch reads EHDAEENVEH. A disordered region spans residues 683–738; that stretch reads EHDAEENVEHDAEENAEENVEENVEEVEENVEENVEENVGEKKMRREEKKKRVQEP. Over residues 693 to 720 the composition is skewed to acidic residues; sequence DAEENAEENVEENVEEVEENVEENVEEN.

The protein resides in the cell membrane. Functionally, may disrupt the normal intermolecular interactions of the cytoplasmic domain of band 3 and thereby facilitate the invagination of the red cell membrane which is necessary for the formation of the parasitophorous vacuole. This Plasmodium falciparum (isolate NF7 / Ghana) protein is Ring-infected erythrocyte surface antigen (RESA).